Here is a 152-residue protein sequence, read N- to C-terminus: Ribosome maturation factor RimP (152 aa).

Belongs to the RimP family.

It localises to the cytoplasm. Its function is as follows. Required for maturation of 30S ribosomal subunits. This chain is Ribosome maturation factor RimP, found in Aeromonas hydrophila subsp. hydrophila (strain ATCC 7966 / DSM 30187 / BCRC 13018 / CCUG 14551 / JCM 1027 / KCTC 2358 / NCIMB 9240 / NCTC 8049).